The chain runs to 358 residues: CCAAT/enhancer-binding protein alpha (358 aa).

The segment at 1-55 (MESADFYEAEPRPPMSSHLQSPPHAPSNAAFGFPRGAGPAPPPAPPAAPEPLGGI) is disordered. Positions 1–70 (MESADFYEAE…SIDISAYIDP (70 aa)) are required to repress E2F1:TFDP1-mediated transcription, to inhibit cell cycle and to induce adipocyte differentiation. A compositionally biased stretch (low complexity) spans 29 to 38 (AAFGFPRGAG). The span at 39-49 (PAPPPAPPAAP) shows a compositional bias: pro residues. The segment at 54 to 72 (GICEHETSIDISAYIDPAA) is required for interaction with TRIB1. The segment at 126 to 200 (PPGYGCAAAG…HASPAHLAAP (75 aa)) is required to induce adipocyte differentiation. Lys-159 is subject to N6-acetyllysine; alternate. A Glycyl lysine isopeptide (Lys-Gly) (interchain with G-Cter in SUMO); alternate cross-link involves residue Lys-159. Lys-159 participates in a covalent cross-link: Glycyl lysine isopeptide (Lys-Gly) (interchain with G-Cter in SUMO2); alternate. Disordered regions lie at residues 176-195 (LFPYQPPPPPPPPHPHASPA) and 213-310 (TMHL…NVET). Over residues 179–191 (YQPPPPPPPPHPH) the composition is skewed to pro residues. Positions 180-194 (QPPPPPPPPHPHASP) are required to functionally cooperate with SREBF1 in promoter activation. Phosphoserine is present on Ser-193. The segment covering 220–234 (HPTPPPTPVPSPHPA) has biased composition (pro residues). 2 positions are modified to phosphothreonine; by GSK3: Thr-222 and Thr-226. Ser-230 is subject to Phosphoserine; by GSK3. Positions 240–358 (AGLPGPGGSL…SLVKAMGNCA (119 aa)) are interaction with FOXO1. Gly residues predominate over residues 261-271 (TGGGGGGGAGA). A compositionally biased stretch (basic and acidic residues) spans 276-292 (KSVDKNSNEYRVRRERN). The bZIP domain maps to 282 to 345 (SNEYRVRRER…DTLRGIFRQL (64 aa)). A DNA-binding region spans residues 285–300 (YRVRRERNNIAVRKSR). The interval 286 to 313 (RVRRERNNIAVRKSRDKAKQRNVETQQK) is basic motif. The segment at 317–345 (LTSDNDRLRKRVEQLSRELDTLRGIFRQL) is leucine-zipper.

It belongs to the bZIP family. C/EBP subfamily. As to quaternary structure, binds DNA as a homodimer and as a heterodimer. Can form stable heterodimers with CEBPB, CEBPD, CEBPE and CEBPG. Can form stable homodimers (also isoform 2 and isoform 3 dimers) and heterodimers with CEBPB (with isoform 2 and isoform 3) and CEBPG. Interacts with PRDM16. Interacts with UBN1. Interacts with ZNF638; this interaction increases transcriptional activation. Interacts with the complex TFDP2:E2F1; the interaction prevents CEBPA binding to target gene promoters and represses its transcriptional activity. Interacts with RB1. Interacts (when phosphorylated at Ser-193) with CDK2, CDK4, E2F4 and SMARCA2. Interacts with SREBPF1. Interacts with FOXO1 (via the Fork-head domain); the interaction increases when FOXO1 is deacetylated. Interacts with SIX1. Interacts (via recognition sequence) with TRIB1. In terms of assembly, interacts with TAF1A and UBTF. Interacts with NPM1. Sumoylated, sumoylation blocks the inhibitory effect on cell proliferation by disrupting the interaction with SMARCA2. Post-translationally, phosphorylation at Ser-193 is required for interaction with CDK2, CDK4 and SWI/SNF complex leading to cell cycle inhibition. Dephosphorylated at Ser-193 by protein phosphatase 2A (PP2A) through PI3K/AKT signaling pathway regulation. Phosphorylation at Thr-222 and Thr-226 by GSK3 is constitutive in adipose tissue and lung. In liver, both Thr-222 and Thr-226 are phosphorylated only during feeding but not during fasting. Phosphorylation of the GSK3 consensus sites selectively decreases transactivation activity on IRE-controlled promoters. In terms of processing, ubiquitinated by COP1 upon interaction with TRIB1. In terms of tissue distribution, isoform 2 and isoform 3 are expressed in liver (at protein level).

Its subcellular location is the nucleus. It is found in the nucleolus. Functionally, transcription factor that coordinates proliferation arrest and the differentiation of myeloid progenitors, adipocytes, hepatocytes, and cells of the lung and the placenta. Binds directly to the consensus DNA sequence 5'-T[TG]NNGNAA[TG]-3' acting as an activator on distinct target genes. During early embryogenesis, plays essential and redundant functions with CEBPB. Essential for the transition from common myeloid progenitors (CMP) to granulocyte/monocyte progenitors (GMP). Critical for the proper development of the liver and the lung. Necessary for terminal adipocyte differentiation, is required for postnatal maintenance of systemic energy homeostasis and lipid storage. To regulate these different processes at the proper moment and tissue, interplays with other transcription factors and modulators. Down-regulates the expression of genes that maintain cells in an undifferentiated and proliferative state through E2F1 repression, which is critical for its ability to induce adipocyte and granulocyte terminal differentiation. Reciprocally E2F1 blocks adipocyte differentiation by binding to specific promoters and repressing CEBPA binding to its target gene promoters. Proliferation arrest also depends on a functional binding to SWI/SNF complex. In liver, regulates gluconeogenesis and lipogenesis through different mechanisms. To regulate gluconeogenesis, functionally cooperates with FOXO1 binding to IRE-controlled promoters and regulating the expression of target genes such as PCK1 or G6PC1. To modulate lipogenesis, interacts and transcriptionally synergizes with SREBF1 in promoter activation of specific lipogenic target genes such as ACAS2. In adipose tissue, seems to act as FOXO1 coactivator accessing to ADIPOQ promoter through FOXO1 binding sites. Can act as dominant-negative. Binds DNA and have transctivation activity, even if much less efficiently than isoform 2. Does not inhibit cell proliferation. In terms of biological role, directly and specifically enhances ribosomal DNA transcription interacting with RNA polymerase I-specific cofactors and inducing histone acetylation. This is CCAAT/enhancer-binding protein alpha from Rattus norvegicus (Rat).